A 407-amino-acid polypeptide reads, in one-letter code: Methylenetetrahydrofolate--tRNA-(uracil-5-)-methyltransferase TrmFO (407 aa).

9-14 (GAGLAG) serves as a coordination point for FAD.

It belongs to the MnmG family. TrmFO subfamily. FAD serves as cofactor.

The protein resides in the cytoplasm. The catalysed reaction is uridine(54) in tRNA + (6R)-5,10-methylene-5,6,7,8-tetrahydrofolate + NADH + H(+) = 5-methyluridine(54) in tRNA + (6S)-5,6,7,8-tetrahydrofolate + NAD(+). It catalyses the reaction uridine(54) in tRNA + (6R)-5,10-methylene-5,6,7,8-tetrahydrofolate + NADPH + H(+) = 5-methyluridine(54) in tRNA + (6S)-5,6,7,8-tetrahydrofolate + NADP(+). In terms of biological role, catalyzes the folate-dependent formation of 5-methyl-uridine at position 54 (M-5-U54) in all tRNAs. The sequence is that of Methylenetetrahydrofolate--tRNA-(uracil-5-)-methyltransferase TrmFO from Lactobacillus helveticus (strain DPC 4571).